The following is a 238-amino-acid chain: Small ribosomal subunit protein uS2 (238 aa).

Belongs to the universal ribosomal protein uS2 family.

The sequence is that of Small ribosomal subunit protein uS2 from Prochlorococcus marinus (strain MIT 9211).